The following is a 502-amino-acid chain: NAD(P)H-quinone oxidoreductase subunit 2, chloroplastic (502 aa).

14 consecutive transmembrane segments (helical) span residues 15–35 (VLPE…DLIF), 42–62 (VLPY…LFQW), 79–99 (LSIA…LLSI), 108–128 (TLSE…LLCG), 132–152 (ILMI…LTGY), 167–187 (LLIG…LYGL), 210–230 (LASL…IAAA), 253–275 (VSSK…PYII), 278–298 (WHNI…IIAI), 307–327 (LGYS…AGNI), 334–354 (LVYM…VILF), 375–395 (ILAL…PFGG), 413–433 (LLVF…IKII), and 468–488 (ILIC…IISI).

Belongs to the complex I subunit 2 family. In terms of assembly, NDH is composed of at least 16 different subunits, 5 of which are encoded in the nucleus.

It is found in the plastid. The protein resides in the chloroplast thylakoid membrane. The catalysed reaction is a plastoquinone + NADH + (n+1) H(+)(in) = a plastoquinol + NAD(+) + n H(+)(out). It carries out the reaction a plastoquinone + NADPH + (n+1) H(+)(in) = a plastoquinol + NADP(+) + n H(+)(out). NDH shuttles electrons from NAD(P)H:plastoquinone, via FMN and iron-sulfur (Fe-S) centers, to quinones in the photosynthetic chain and possibly in a chloroplast respiratory chain. The immediate electron acceptor for the enzyme in this species is believed to be plastoquinone. Couples the redox reaction to proton translocation, and thus conserves the redox energy in a proton gradient. This Mesostigma viride (Green alga) protein is NAD(P)H-quinone oxidoreductase subunit 2, chloroplastic.